A 104-amino-acid polypeptide reads, in one-letter code: Ig lambda-1 chain C region (104 aa).

Positions P6 to S99 constitute an Ig-like domain. A disulfide bond links C27 and C85.

The protein is Ig lambda-1 chain C region of Rattus norvegicus (Rat).